The primary structure comprises 514 residues: Peptide chain release factor 3 (514 aa).

Residues 8–268 enclose the tr-type G domain; sequence KKRRTFAIIS…TFLKFAPEPH (261 aa). Residues 17–24, 85–89, and 139–142 contribute to the GTP site; these read SHPDAGKT, DTPGH, and NKLD.

It belongs to the TRAFAC class translation factor GTPase superfamily. Classic translation factor GTPase family. PrfC subfamily.

The protein resides in the cytoplasm. In terms of biological role, increases the formation of ribosomal termination complexes and stimulates activities of RF-1 and RF-2. It binds guanine nucleotides and has strong preference for UGA stop codons. It may interact directly with the ribosome. The stimulation of RF-1 and RF-2 is significantly reduced by GTP and GDP, but not by GMP. This Streptococcus pneumoniae serotype 19F (strain G54) protein is Peptide chain release factor 3.